A 142-amino-acid polypeptide reads, in one-letter code: Large ribosomal subunit protein uL11 (142 aa).

It belongs to the universal ribosomal protein uL11 family. As to quaternary structure, part of the ribosomal stalk of the 50S ribosomal subunit. Interacts with L10 and the large rRNA to form the base of the stalk. L10 forms an elongated spine to which L12 dimers bind in a sequential fashion forming a multimeric L10(L12)X complex. One or more lysine residues are methylated.

Forms part of the ribosomal stalk which helps the ribosome interact with GTP-bound translation factors. The sequence is that of Large ribosomal subunit protein uL11 from Nocardioides sp. (strain ATCC BAA-499 / JS614).